The chain runs to 943 residues: Isoleucine--tRNA ligase (943 aa).

A 'HIGH' region motif is present at residues 58–68 (PYANGTIHIGH). Position 567 (Glu567) interacts with L-isoleucyl-5'-AMP. The short motif at 608 to 612 (KMSKS) is the 'KMSKS' region element. Lys611 is an ATP binding site. Residues Cys906, Cys909, Cys926, and Cys929 each coordinate Zn(2+).

The protein belongs to the class-I aminoacyl-tRNA synthetase family. IleS type 1 subfamily. In terms of assembly, monomer. Requires Zn(2+) as cofactor.

The protein resides in the cytoplasm. It catalyses the reaction tRNA(Ile) + L-isoleucine + ATP = L-isoleucyl-tRNA(Ile) + AMP + diphosphate. Functionally, catalyzes the attachment of isoleucine to tRNA(Ile). As IleRS can inadvertently accommodate and process structurally similar amino acids such as valine, to avoid such errors it has two additional distinct tRNA(Ile)-dependent editing activities. One activity is designated as 'pretransfer' editing and involves the hydrolysis of activated Val-AMP. The other activity is designated 'posttransfer' editing and involves deacylation of mischarged Val-tRNA(Ile). The chain is Isoleucine--tRNA ligase from Pseudomonas fluorescens (strain Pf0-1).